The sequence spans 195 residues: Cysteine/O-acetylserine efflux protein (195 aa).

Over 1–9 (MTPMLLSAF) the chain is Periplasmic. Residues 10–32 (WTYTLITALTPGPNNILALSAAT) traverse the membrane as a helical segment. Residues 33–46 (AHGFRQSIRVLAGM) are Cytoplasmic-facing. The chain crosses the membrane as a helical span at residues 47 to 67 (SLGFLVVMLLCAGIAFSLAVI). Over 68-69 (DP) the chain is Periplasmic. The chain crosses the membrane as a helical span at residues 70–90 (AIIHLLSWVGAAYILWLAWKI). Topologically, residues 91–104 (ATSPAADEKVRPKP) are cytoplasmic. Residues 105 to 125 (VGFWVSFGLQFVNVKIILYGI) traverse the membrane as a helical segment. Residues 126–141 (TALSTFVLPQTQALNW) lie on the Periplasmic side of the membrane. A helical transmembrane segment spans residues 142-162 (VIGVSILLALIGTFGNVCWAL). At 163 to 176 (AGHLFQRAFRHYGR) the chain is on the cytoplasmic side. A helical transmembrane segment spans residues 177-194 (QLNIILALLLVYCAVRIF). Position 195 (tyrosine 195) is a topological domain, periplasmic.

It belongs to the Rht family.

The protein resides in the cell inner membrane. It catalyses the reaction O-acetyl-L-serine(in) = O-acetyl-L-serine(out). The enzyme catalyses L-cysteine(in) = L-cysteine(out). Its function is as follows. Exporter of O-acetylserine (OAS) and cysteine. The protein is Cysteine/O-acetylserine efflux protein (eamB) of Salmonella paratyphi A (strain ATCC 9150 / SARB42).